The sequence spans 256 residues: Small ribosomal subunit protein eS1 (256 aa).

A2 bears the N-acetylalanine; partial mark.

This sequence belongs to the eukaryotic ribosomal protein eS1 family. Component of the small ribosomal subunit. Mature ribosomes consist of a small (40S) and a large (60S) subunit. The 40S subunit contains about 33 different proteins and 1 molecule of RNA (18S). The 60S subunit contains about 49 different proteins and 3 molecules of RNA (25S, 5.8S and 5S).

It localises to the cytoplasm. The polypeptide is Small ribosomal subunit protein eS1 (Lentinula edodes (Shiitake mushroom)).